Consider the following 263-residue polypeptide: Probable ribosomal RNA small subunit methyltransferase A (263 aa).

L12, G37, E58, D83, and N100 together coordinate S-adenosyl-L-methionine.

This sequence belongs to the class I-like SAM-binding methyltransferase superfamily. rRNA adenine N(6)-methyltransferase family. RsmA subfamily.

It is found in the cytoplasm. Its function is as follows. Specifically dimethylates two adjacent adenosines in the loop of a conserved hairpin near the 3'-end of 16S rRNA in the 30S particle. May play a critical role in biogenesis of 30S subunits. This chain is Probable ribosomal RNA small subunit methyltransferase A, found in Methanococcus maripaludis (strain C6 / ATCC BAA-1332).